We begin with the raw amino-acid sequence, 499 residues long: Bifunctional purine biosynthesis protein PurH (499 aa).

In terms of domain architecture, MGS-like spans 1-144 (MINRALISVY…KNFKDVIVVT (144 aa)).

It belongs to the PurH family.

The catalysed reaction is (6R)-10-formyltetrahydrofolate + 5-amino-1-(5-phospho-beta-D-ribosyl)imidazole-4-carboxamide = 5-formamido-1-(5-phospho-D-ribosyl)imidazole-4-carboxamide + (6S)-5,6,7,8-tetrahydrofolate. The enzyme catalyses IMP + H2O = 5-formamido-1-(5-phospho-D-ribosyl)imidazole-4-carboxamide. It functions in the pathway purine metabolism; IMP biosynthesis via de novo pathway; 5-formamido-1-(5-phospho-D-ribosyl)imidazole-4-carboxamide from 5-amino-1-(5-phospho-D-ribosyl)imidazole-4-carboxamide (10-formyl THF route): step 1/1. Its pathway is purine metabolism; IMP biosynthesis via de novo pathway; IMP from 5-formamido-1-(5-phospho-D-ribosyl)imidazole-4-carboxamide: step 1/1. The polypeptide is Bifunctional purine biosynthesis protein PurH (Clostridium kluyveri (strain NBRC 12016)).